Reading from the N-terminus, the 419-residue chain is UDP-N-acetylglucosamine 1-carboxyvinyltransferase (419 aa).

22–23 (KN) lines the phosphoenolpyruvate pocket. Arg-91 serves as a coordination point for UDP-N-acetyl-alpha-D-glucosamine. The active-site Proton donor is Cys-115. Cys-115 carries the post-translational modification 2-(S-cysteinyl)pyruvic acid O-phosphothioketal. UDP-N-acetyl-alpha-D-glucosamine contacts are provided by residues 120–124 (RPVDL), 160–163 (KVSV), Asp-305, and Val-327.

It belongs to the EPSP synthase family. MurA subfamily.

The protein resides in the cytoplasm. The enzyme catalyses phosphoenolpyruvate + UDP-N-acetyl-alpha-D-glucosamine = UDP-N-acetyl-3-O-(1-carboxyvinyl)-alpha-D-glucosamine + phosphate. Its pathway is cell wall biogenesis; peptidoglycan biosynthesis. In terms of biological role, cell wall formation. Adds enolpyruvyl to UDP-N-acetylglucosamine. The sequence is that of UDP-N-acetylglucosamine 1-carboxyvinyltransferase from Salmonella arizonae (strain ATCC BAA-731 / CDC346-86 / RSK2980).